The primary structure comprises 141 residues: Large ribosomal subunit protein uL11 (141 aa).

This sequence belongs to the universal ribosomal protein uL11 family. As to quaternary structure, part of the ribosomal stalk of the 50S ribosomal subunit. Interacts with L10 and the large rRNA to form the base of the stalk. L10 forms an elongated spine to which L12 dimers bind in a sequential fashion forming a multimeric L10(L12)X complex. In terms of processing, one or more lysine residues are methylated.

Functionally, forms part of the ribosomal stalk which helps the ribosome interact with GTP-bound translation factors. The protein is Large ribosomal subunit protein uL11 of Geobacillus sp. (strain WCH70).